Reading from the N-terminus, the 92-residue chain is Acylphosphatase (92 aa).

An Acylphosphatase-like domain is found at 5–92 (YIVAYVYGVV…TPFETFSIRY (88 aa)). Catalysis depends on residues R20 and N38.

The protein belongs to the acylphosphatase family.

It catalyses the reaction an acyl phosphate + H2O = a carboxylate + phosphate + H(+). This is Acylphosphatase (acyP) from Yersinia pseudotuberculosis serotype O:1b (strain IP 31758).